Reading from the N-terminus, the 298-residue chain is Ketohexokinase (298 aa).

Beta-D-fructose contacts are provided by D15, G41, N42, and N45. ATP-binding positions include R108, 226 to 229 (AEEG), and 255 to 258 (GAGD). D258 provides a ligand contact to beta-D-fructose.

Belongs to the carbohydrate kinase PfkB family. As to quaternary structure, homodimer.

It carries out the reaction beta-D-fructose + ATP = beta-D-fructose 1-phosphate + ADP + H(+). The protein operates within carbohydrate metabolism; fructose metabolism. Its activity is regulated as follows. Requires potassium. Inhibition by ADP. Its function is as follows. Catalyzes the phosphorylation of the ketose sugar fructose to fructose-1-phosphate. The protein is Ketohexokinase of Mus musculus (Mouse).